The primary structure comprises 223 residues: Thymine-DNA glycosylase (223 aa).

Residues cysteine 201, cysteine 208, cysteine 211, and cysteine 217 each coordinate [4Fe-4S] cluster.

The protein belongs to the Nth/MutY family. The cofactor is [4Fe-4S] cluster.

The enzyme catalyses Hydrolyzes mismatched double-stranded DNA and polynucleotides, releasing free thymine.. With respect to regulation, thymine cleavage is completely inhibited by Ni(2+), Co(2+), Zn(2+), Cu(2+) and Mn(2+). Activity is not affected by Mg(2+) and Ca(2+). Its function is as follows. DNA glycosylase that excises thymine from T/G mismatches. Also has a weak DNA glycosylase activity on uracil paired with various bases. The sequence is that of Thymine-DNA glycosylase from Aeropyrum pernix (strain ATCC 700893 / DSM 11879 / JCM 9820 / NBRC 100138 / K1).